Reading from the N-terminus, the 331-residue chain is Phenylalanine--tRNA ligase alpha subunit (331 aa).

Residue glutamate 252 coordinates Mg(2+).

It belongs to the class-II aminoacyl-tRNA synthetase family. Phe-tRNA synthetase alpha subunit type 1 subfamily. In terms of assembly, tetramer of two alpha and two beta subunits. Mg(2+) is required as a cofactor.

The protein localises to the cytoplasm. It catalyses the reaction tRNA(Phe) + L-phenylalanine + ATP = L-phenylalanyl-tRNA(Phe) + AMP + diphosphate + H(+). This is Phenylalanine--tRNA ligase alpha subunit from Stenotrophomonas maltophilia (strain R551-3).